The following is a 445-amino-acid chain: MEDLALPAAPPAPTLSFTLLAAAAAVAEAMEEALGAALPPLTAPVPAPGDDSACGSPCSVASDCSSVASADFEGFAELGTSLLAGPAVLFDDLTAASVAVAEAAEPRAVGATARSVFAMDCVPLWGLESICGRRPEMEDDYAVVPRFFDLPLWMVAGDAAVDGLDRASFRLPAHFFAVYDGHGGVQVANYCRKRIHAVLTEELRRAEDDACGSDLSGLESKKLWEKAFVDCFSRVDAEVGGNAASGAPPVAPDTVGSTAVVAVVCSSHVIVANCGDSRAVLCRGKQPLPLSLDHKPNREDEYARIEALGGKVIQWNGYRVLGVLAMSRSIGDKYLKPYIIPVPEVTVVARAKDDDCLILASDGLWDVMSNEEVCDAARKRILLWHKKNAATASTSSAQISGDSSDPAAQAAADYLSKLALQKGSKDNITVVVIDLKAHRKFKSKA.

Residues 124–435 (LWGLESICGR…DNITVVVIDL (312 aa)) form the PPM-type phosphatase domain. Mn(2+) is bound by residues D180, G181, D362, and D426.

The protein belongs to the PP2C family. Interacts with PYL10, SAPK8 and SAPK10. Binding to PYL10 is dependent on the presence of abscisic acid (ABA). Interacts with PYL3, PYL5, PYL9 and PYL10. Binding to PYL9 and PYL10 is dependent on the presence of ABA. Requires Mg(2+) as cofactor. The cofactor is Mn(2+). Expressed in leaf blades, leaf sheaths and lamina joints. Expressed at low levels in roots, stems, flowers and panicles.

Its subcellular location is the cytoplasm. The protein localises to the cytosol. The protein resides in the nucleus. The enzyme catalyses O-phospho-L-seryl-[protein] + H2O = L-seryl-[protein] + phosphate. The catalysed reaction is O-phospho-L-threonyl-[protein] + H2O = L-threonyl-[protein] + phosphate. Its activity is regulated as follows. Repressed by abscisic acid-bound PYL1. Protein phosphatase that acts as a negative regulator of abscisic acid (ABA) signaling. Involved in the regulation of root architecture development and drought resistance. Can dephosphorylate SAPK8 and SAPK10 in vitro. Together with PYL10, SAPK8 and SAPK10, may form an ABA signaling module involved in stress response. This Oryza sativa subsp. japonica (Rice) protein is Protein phosphatase 2C 53.